Here is a 332-residue protein sequence, read N- to C-terminus: Ketol-acid reductoisomerase (NADP(+)) (332 aa).

A KARI N-terminal Rossmann domain is found at Ala2–Thr182. Residues Tyr25 to Gln28, Ser53, and Asp83 to Gln86 each bind NADP(+). His108 is a catalytic residue. NADP(+) is bound at residue Gly134. The KARI C-terminal knotted domain maps to Thr183–Gly328. Residues Asp191, Glu195, Glu227, and Glu231 each coordinate Mg(2+). Ser252 contacts substrate.

It belongs to the ketol-acid reductoisomerase family. It depends on Mg(2+) as a cofactor.

It carries out the reaction (2R)-2,3-dihydroxy-3-methylbutanoate + NADP(+) = (2S)-2-acetolactate + NADPH + H(+). It catalyses the reaction (2R,3R)-2,3-dihydroxy-3-methylpentanoate + NADP(+) = (S)-2-ethyl-2-hydroxy-3-oxobutanoate + NADPH + H(+). Its pathway is amino-acid biosynthesis; L-isoleucine biosynthesis; L-isoleucine from 2-oxobutanoate: step 2/4. The protein operates within amino-acid biosynthesis; L-valine biosynthesis; L-valine from pyruvate: step 2/4. Its function is as follows. Involved in the biosynthesis of branched-chain amino acids (BCAA). Catalyzes an alkyl-migration followed by a ketol-acid reduction of (S)-2-acetolactate (S2AL) to yield (R)-2,3-dihydroxy-isovalerate. In the isomerase reaction, S2AL is rearranged via a Mg-dependent methyl migration to produce 3-hydroxy-3-methyl-2-ketobutyrate (HMKB). In the reductase reaction, this 2-ketoacid undergoes a metal-dependent reduction by NADPH to yield (R)-2,3-dihydroxy-isovalerate. This chain is Ketol-acid reductoisomerase (NADP(+)), found in Sulfurisphaera tokodaii (strain DSM 16993 / JCM 10545 / NBRC 100140 / 7) (Sulfolobus tokodaii).